We begin with the raw amino-acid sequence, 202 residues long: Imidazoleglycerol-phosphate dehydratase (202 aa).

The protein belongs to the imidazoleglycerol-phosphate dehydratase family.

It localises to the cytoplasm. It catalyses the reaction D-erythro-1-(imidazol-4-yl)glycerol 3-phosphate = 3-(imidazol-4-yl)-2-oxopropyl phosphate + H2O. It functions in the pathway amino-acid biosynthesis; L-histidine biosynthesis; L-histidine from 5-phospho-alpha-D-ribose 1-diphosphate: step 6/9. The chain is Imidazoleglycerol-phosphate dehydratase from Chelativorans sp. (strain BNC1).